Here is a 382-residue protein sequence, read N- to C-terminus: Glutamate 5-kinase (382 aa).

Lys-15 contributes to the ATP binding site. Residues Ser-62, Asp-149, and Asn-161 each coordinate substrate. 181–182 lines the ATP pocket; sequence TD. Residues 288 to 366 enclose the PUA domain; sequence RGSVSVDAGA…VEIERLLGYS (79 aa).

The protein belongs to the glutamate 5-kinase family.

It localises to the cytoplasm. It catalyses the reaction L-glutamate + ATP = L-glutamyl 5-phosphate + ADP. Its pathway is amino-acid biosynthesis; L-proline biosynthesis; L-glutamate 5-semialdehyde from L-glutamate: step 1/2. Catalyzes the transfer of a phosphate group to glutamate to form L-glutamate 5-phosphate. The protein is Glutamate 5-kinase of Delftia acidovorans (strain DSM 14801 / SPH-1).